The following is a 171-amino-acid chain: UPF0303 protein YPTS_2661 (171 aa).

The protein belongs to the UPF0303 family.

In Yersinia pseudotuberculosis serotype IB (strain PB1/+), this protein is UPF0303 protein YPTS_2661.